We begin with the raw amino-acid sequence, 1878 residues long: Breast cancer type 1 susceptibility protein homolog (1878 aa).

M1 carries the post-translational modification N-acetylmethionine. The RING-type zinc-finger motif lies at C24 to K65. K109 participates in a covalent cross-link: Glycyl lysine isopeptide (Lys-Gly) (interchain with G-Cter in SUMO2). S114 is modified (phosphoserine). K298 participates in a covalent cross-link: Glycyl lysine isopeptide (Lys-Gly) (interchain with G-Cter in SUMO2). Polar residues predominate over residues N303–W318. The disordered stretch occupies residues N303–Q329. Residue K336 forms a Glycyl lysine isopeptide (Lys-Gly) (interchain with G-Cter in SUMO2) linkage. Residues E349–Q365 are compositionally biased toward basic and acidic residues. The tract at residues E349–P368 is disordered. 4 positions are modified to phosphoserine: S392, S395, S420, and S431. Glycyl lysine isopeptide (Lys-Gly) (interchain with G-Cter in SUMO2) cross-links involve residues K456, K516, and K581. Residues N548–S614 form a disordered region. Positions Y559–T582 are enriched in basic and acidic residues. A compositionally biased stretch (low complexity) spans S590–S601. A compositionally biased stretch (basic residues) spans A603–S614. Phosphoserine occurs at positions 692, 712, and 751. S987 bears the Phosphoserine; by CHEK2 mark. S1008 is modified (phosphoserine). Residue K1079 forms a Glycyl lysine isopeptide (Lys-Gly) (interchain with G-Cter in SUMO2) linkage. 2 disordered regions span residues P1134–L1154 and Q1183–E1221. Polar residues-rich tracts occupy residues M1138–S1148 and Q1183–S1194. Residues S1144, S1190, S1192, S1212, S1218, S1219, and S1281 each carry the phosphoserine modification. A compositionally biased stretch (polar residues) spans D1315 to K1325. Disordered stretches follow at residues D1315–R1401 and E1419–S1504. Residues H1329 to V1343 show a composition bias toward basic and acidic residues. Residues S1331, S1344, and S1391 each carry the phosphoserine modification. Acidic residues predominate over residues S1344 to L1369. Over residues E1377 to R1401 the composition is skewed to polar residues. Residue T1398 is modified to Phosphothreonine. The segment at R1401–Q1428 is interaction with PALB2. 2 positions are modified to phosphoserine: S1427 and S1460. The segment covering D1465–N1491 has biased composition (polar residues). 2 positions are modified to phosphoserine: S1527 and S1545. The disordered stretch occupies residues G1570–L1590. BRCT domains lie at R1652–V1739 and Q1764–I1863. The segment at V1743 to Q1764 is disordered. Positions R1754–Q1764 are enriched in basic and acidic residues.

Heterodimer with BARD1. Part of the BRCA1-associated genome surveillance complex (BASC), which contains BRCA1, MSH2, MSH6, MLH1, ATM, BLM, PMS2 and the MRE11-RAD50-NBN protein (MRN) complex. This association could be a dynamic process changing throughout the cell cycle and within subnuclear domains. Component of the BRCA1-A complex, at least composed of BRCA1, BARD1, UIMC1/RAP80, ABRAXAS1, BRCC3/BRCC36, BABAM2 and BABAM1/NBA1. Interacts (via the BRCT domains) with ABRAXAS1 (phosphorylated form); this is important for recruitment to sites of DNA damage. Can form a heterotetramer with two molecules of ABRAXAS1 (phosphorylated form). Component of the BRCA1-RBBP8 complex. Interacts (via the BRCT domains) with RBBP8 ('Ser-327' phosphorylated form); the interaction ubiquitinates RBBP8, regulates CHEK1 activation, and involves RBBP8 in BRCA1-dependent G2/M checkpoint control on DNA damage. Associates with RNA polymerase II holoenzyme. Interacts with SMC1A, NELFB, DCLRE1C, CLSPN. CHEK1, CHEK2, BAP1, BRCC3, UBXN1 and PCLAF. Interacts (via BRCT domains) with BRIP1 (phosphorylated form). Interacts with FANCD2 (ubiquitinated form). Interacts with H2AX (phosphorylated on 'Ser-140'). Interacts (via the BRCT domains) with ACACA (phosphorylated form); the interaction prevents dephosphorylation of ACACA. Part of a BRCA complex containing BRCA1, BRCA2 and PALB2. Interacts directly with PALB2; the interaction is essential for its function in HRR. Interacts directly with BRCA2; the interaction occurs only in the presence of PALB2 which serves as the bridging protein. Interacts (via the BRCT domains) with LMO4; the interaction represses the transcriptional activity of BRCA1. Interacts (via the BRCT domains) with CCAR2 (via N-terminus); the interaction represses the transcriptional activator activity of BRCA1. Interacts with EXD2. Interacts (via C-terminus) with DHX9; this interaction is direct and links BRCA1 to the RNA polymerase II holoenzyme. Interacts with DNA helicase ZGRF1; the interaction is increased following DNA damage induction. Post-translationally, phosphorylated in response to IR, UV, and various stimuli that cause checkpoint activation, probably by ATM or ATR. Phosphorylation at Ser-987 by CHEK2 regulates mitotic spindle assembly. Phosphorylation by AURKA regulates centrosomal microtubule nucleation. Autoubiquitinated, undergoes 'Lys-6'-linked polyubiquitination. 'Lys-6'-linked polyubiquitination does not promote degradation.

It is found in the nucleus. The protein resides in the chromosome. Its subcellular location is the cytoplasm. The catalysed reaction is S-ubiquitinyl-[E2 ubiquitin-conjugating enzyme]-L-cysteine + [acceptor protein]-L-lysine = [E2 ubiquitin-conjugating enzyme]-L-cysteine + N(6)-ubiquitinyl-[acceptor protein]-L-lysine.. It functions in the pathway protein modification; protein ubiquitination. Functionally, E3 ubiquitin-protein ligase that specifically mediates the formation of 'Lys-6'-linked polyubiquitin chains and plays a central role in DNA repair by facilitating cellular responses to DNA damage. It is unclear whether it also mediates the formation of other types of polyubiquitin chains. The BRCA1-BARD1 heterodimer coordinates a diverse range of cellular pathways such as DNA damage repair, ubiquitination and transcriptional regulation to maintain genomic stability. Regulates centrosomal microtubule nucleation. Required for appropriate cell cycle arrests after ionizing irradiation in both the S-phase and the G2 phase of the cell cycle. Required for FANCD2 targeting to sites of DNA damage. Inhibits lipid synthesis by binding to inactive phosphorylated ACACA and preventing its dephosphorylation. Contributes to homologous recombination repair (HRR) via its direct interaction with PALB2, fine-tunes recombinational repair partly through its modulatory role in the PALB2-dependent loading of BRCA2-RAD51 repair machinery at DNA breaks. Component of the BRCA1-RBBP8 complex which regulates CHEK1 activation and controls cell cycle G2/M checkpoints on DNA damage via BRCA1-mediated ubiquitination of RBBP8. Acts as a transcriptional activator. This is Breast cancer type 1 susceptibility protein homolog (BRCA1) from Canis lupus familiaris (Dog).